The following is a 130-amino-acid chain: uncharacterized protein (130 aa).

This is an uncharacterized protein from Acanthamoeba polyphaga mimivirus (APMV).